A 486-amino-acid polypeptide reads, in one-letter code: FAD-dependent oxidoreductase domain-containing protein 1 (486 aa).

The helical transmembrane segment at 66 to 86 threads the bilayer; sequence VVVVGGGVLGLSVAYWLKQLE.

Associates with components of the mitochondrial respiratory chain complex I. Requires FAD as cofactor.

Its subcellular location is the mitochondrion inner membrane. Its function is as follows. Required for the assembly of the mitochondrial membrane respiratory chain NADH dehydrogenase (Complex I). Involved in mid-late stages of complex I assembly. In Macaca fascicularis (Crab-eating macaque), this protein is FAD-dependent oxidoreductase domain-containing protein 1 (FOXRED1).